A 633-amino-acid chain; its full sequence is Uracil permease (633 aa).

The next 12 helical transmembrane spans lie at 143 to 163 (WWQCWITIWIGYGFVGAFVVL), 173 to 193 (LSFPISSRASFGIFFSLWPVI), 197 to 217 (VMAIVWYSVQAYIAATPVSLM), 242 to 262 (YEFMCFFIFWAASLPFLLVPP), 268 to 288 (LFTVKAVLVPFASFGFLIWAI), 310 to 330 (FSWAFLRSLMGCMANFSTMVI), 350 to 370 (LVCIPFLFSITCLIGILVTAA), 400 to 420 (AGVFLISFVFAVAQLGTNISA), 442 to 462 (GSLFCAAMALCICPWNLMATS), 465 to 485 (FTMALSAYAIFLSSIAGVVCS), 521 to 541 (ALAAYLCGVAPCLPGFIAEVG), and 559 to 579 (YWVGYGLSFSSYTALCYFFPV).

It belongs to the purine-cytosine permease (2.A.39) family. Glycosylated (possible); but there is not yet direct biochemical evidence for it.

Its subcellular location is the membrane. Functionally, transport of uracil. In Saccharomyces cerevisiae (strain ATCC 204508 / S288c) (Baker's yeast), this protein is Uracil permease (FUR4).